Consider the following 299-residue polypeptide: ATP phosphoribosyltransferase (299 aa).

This sequence belongs to the ATP phosphoribosyltransferase family. Long subfamily. The cofactor is Mg(2+).

The protein resides in the cytoplasm. The enzyme catalyses 1-(5-phospho-beta-D-ribosyl)-ATP + diphosphate = 5-phospho-alpha-D-ribose 1-diphosphate + ATP. It participates in amino-acid biosynthesis; L-histidine biosynthesis; L-histidine from 5-phospho-alpha-D-ribose 1-diphosphate: step 1/9. Feedback inhibited by histidine. Catalyzes the condensation of ATP and 5-phosphoribose 1-diphosphate to form N'-(5'-phosphoribosyl)-ATP (PR-ATP). Has a crucial role in the pathway because the rate of histidine biosynthesis seems to be controlled primarily by regulation of HisG enzymatic activity. This Actinobacillus pleuropneumoniae serotype 7 (strain AP76) protein is ATP phosphoribosyltransferase.